Here is a 229-residue protein sequence, read N- to C-terminus: Cytidylate kinase (229 aa).

12–20 (GPSGTGKSS) contacts ATP.

Belongs to the cytidylate kinase family. Type 1 subfamily.

It is found in the cytoplasm. It catalyses the reaction CMP + ATP = CDP + ADP. The catalysed reaction is dCMP + ATP = dCDP + ADP. The chain is Cytidylate kinase from Rhodococcus jostii (strain RHA1).